Consider the following 38-residue polypeptide: Kappa-theraphotoxin-Hm2a (38 aa).

3 cysteine pairs are disulfide-bonded: Cys-2–Cys-16, Cys-9–Cys-21, and Cys-15–Cys-32. A Phenylalanine amide modification is found at Phe-38.

This sequence belongs to the neurotoxin 10 (Hwtx-1) family. 13 (Hntx-13) subfamily. As to expression, expressed by the venom gland.

The protein localises to the secreted. In terms of biological role, inhibitor of voltage-gated potassium channels. It specifically inhibits Kv2.1/KCNB1 channels. This is Kappa-theraphotoxin-Hm2a from Heteroscodra maculata (Togo starburst tarantula).